A 104-amino-acid polypeptide reads, in one-letter code: Putative arsenate reductase (104 aa).

The active site involves Cys12.

The protein belongs to the ArsC family.

The enzyme catalyses [glutaredoxin]-dithiol + arsenate + glutathione + H(+) = glutathionyl-S-S-[glutaredoxin] + arsenite + H2O. In terms of biological role, reduction of arsenate [As(V)] to arsenite [As(III)]. This protein expands the substrate specificity of ArsAB pump which can extrude arsenite and antimonite to allow for arsenate pumping and resistance. The protein is Putative arsenate reductase (yfjU) of Escherichia coli (strain K12).